The sequence spans 79 residues: UPF0180 protein BCAH820_1484 (79 aa).

It belongs to the UPF0180 family.

The sequence is that of UPF0180 protein BCAH820_1484 from Bacillus cereus (strain AH820).